The sequence spans 802 residues: E3 ubiquitin-protein ligase UHRF2 (802 aa).

The Ubiquitin-like domain maps to 1–78 (MWIQVRTIDG…IQLLVRPDPD (78 aa)). Disordered stretches follow at residues 80 to 116 (LPGTSTQIEAKPCSNSPPKVKKAPRVGPSNQPSTSAR) and 153 to 197 (RASD…STSN). 3 stretches are compositionally biased toward polar residues: residues 82–96 (GTSTQIEAKPCSNSP), 153–177 (RASDGQSRGKTPLKNGSSCKRTNGN), and 188–197 (KLDSVPSTSN). Residues 117–311 (ARLIDPGFGI…VDEIFKIERP (195 aa)) are required for interaction with histone H3. Residues 194 to 288 (STSNSDCVAA…KELRVKIFLG (95 aa)) form an interaction with PCNP region. The PHD-type zinc-finger motif lies at 344–395 (SCSCRVCGGKHEPNMQLLCDECNVAYHIYCLNPPLDKVPEEEYWYCPSCKTD). The tract at residues 414–644 (KMPSASTESR…LQYPAGYPSD (231 aa)) is methyl-CpG binding and interaction with HDAC1. A YDG domain is found at 448-612 (GPIPGIPVGS…FLVWRYLLRR (165 aa)). Residues 640 to 674 (GYPSDKEGKKPKGQSKKQPSGTTKRPISDDDCPSA) are disordered. S667 carries the phosphoserine modification. The RING-type zinc finger occupies 733 to 772 (CVCCQELVYQPVTTECFHNVCKDCLQRSFKAQVFSCPACR).

In terms of assembly, homodimer; disulfide-linked. Binds methylated CpG containing oligonucleotides. Interacts with H3; the interaction has a preference for the 'Lys-9' trimethylated form of H3 (H3K9me3). Interacts with PCNP. Interacts with HDAC1. Interacts directly with CCNE1; the interaction ubiquitinates CCNE1 and appears independent of CCNE1 phosphorylation. Interacts with CCND1; the interaction ubiquitinates CCND1 and appears independent of CCND1 phosphorylation. Interacts with p53/TP53 and RB1. Interacts with UBE2I. Interacts with ZNF618. Interacts with UHRF1. Interacts with FANCD2. Interacts with ATR. Interacts with PCNA. Post-translationally, may be autoubiquitinated; which may lead to proteasomal degradation. In terms of processing, phosphorylated. Phosphorylation may be mediated by CDK2. Autosumoylated.

It is found in the nucleus. The protein resides in the chromosome. It carries out the reaction S-ubiquitinyl-[E2 ubiquitin-conjugating enzyme]-L-cysteine + [acceptor protein]-L-lysine = [E2 ubiquitin-conjugating enzyme]-L-cysteine + N(6)-ubiquitinyl-[acceptor protein]-L-lysine.. The protein operates within protein modification; protein ubiquitination. Its activity is regulated as follows. E3 ligase activity is robustly activated by 5-hydroxymethylcytosine. E3 ubiquitin ligase that plays important roles in DNA methylation, histone modifications, cell cycle and DNA repair. Acts as a specific reader for 5-hydroxymethylcytosine (5hmC) and thereby recruits various substrates to these sites to ubiquitinate them. This activity also allows the maintenance of 5mC levels at specific genomic loci and regulates neuron-related gene expression. Participates in cell cycle regulation by ubiquitinating cyclins CCND1 and CCNE1 and thereby inducing G1 arrest. Also ubiquitinates PCNP leading to its degradation by the proteasome. Plays an active role in DNA damage repair by ubiquitinating p21/CDKN1A leading to its proteasomal degradation. Also promotes DNA repair by acting as an interstrand cross-links (ICLs) sensor. Mechanistically, cooperates with UHRF1 to ensure recruitment of FANCD2 to ICLs, leading to FANCD2 monoubiquitination and subsequent activation. Contributes to UV-induced DNA damage response by physically interacting with ATR in response to irradiation, thereby promoting ATR activation. The sequence is that of E3 ubiquitin-protein ligase UHRF2 (UHRF2) from Homo sapiens (Human).